Consider the following 112-residue polypeptide: Large ribosomal subunit protein eL33w (112 aa).

Belongs to the eukaryotic ribosomal protein eL33 family.

This is Large ribosomal subunit protein eL33w (RPL35AA) from Arabidopsis thaliana (Mouse-ear cress).